We begin with the raw amino-acid sequence, 247 residues long: tRNA (guanine-N(1)-)-methyltransferase (247 aa).

Residues Gly117 and 136–141 each bind S-adenosyl-L-methionine; that span reads LGDFVL.

The protein belongs to the RNA methyltransferase TrmD family. As to quaternary structure, homodimer.

The protein localises to the cytoplasm. It catalyses the reaction guanosine(37) in tRNA + S-adenosyl-L-methionine = N(1)-methylguanosine(37) in tRNA + S-adenosyl-L-homocysteine + H(+). In terms of biological role, specifically methylates guanosine-37 in various tRNAs. The chain is tRNA (guanine-N(1)-)-methyltransferase from Myxococcus xanthus (strain DK1622).